A 117-amino-acid polypeptide reads, in one-letter code: Large ribosomal subunit protein bL19 (117 aa).

Belongs to the bacterial ribosomal protein bL19 family.

In terms of biological role, this protein is located at the 30S-50S ribosomal subunit interface and may play a role in the structure and function of the aminoacyl-tRNA binding site. The polypeptide is Large ribosomal subunit protein bL19 (Aliivibrio salmonicida (strain LFI1238) (Vibrio salmonicida (strain LFI1238))).